The sequence spans 118 residues: Large ribosomal subunit protein bL20 (118 aa).

The protein belongs to the bacterial ribosomal protein bL20 family.

Functionally, binds directly to 23S ribosomal RNA and is necessary for the in vitro assembly process of the 50S ribosomal subunit. It is not involved in the protein synthesizing functions of that subunit. This Cyanothece sp. (strain PCC 7425 / ATCC 29141) protein is Large ribosomal subunit protein bL20.